We begin with the raw amino-acid sequence, 401 residues long: Argininosuccinate synthase (401 aa).

An ATP-binding site is contributed by 9 to 17 (AYSGGLDTS). Tyr86 lines the L-citrulline pocket. An ATP-binding site is contributed by Gly116. L-aspartate-binding residues include Thr118, Asn122, and Asp123. Asn122 is a binding site for L-citrulline. Positions 126, 174, 183, 259, and 271 each coordinate L-citrulline.

It belongs to the argininosuccinate synthase family. Type 1 subfamily. As to quaternary structure, homotetramer.

Its subcellular location is the cytoplasm. It carries out the reaction L-citrulline + L-aspartate + ATP = 2-(N(omega)-L-arginino)succinate + AMP + diphosphate + H(+). It functions in the pathway amino-acid biosynthesis; L-arginine biosynthesis; L-arginine from L-ornithine and carbamoyl phosphate: step 2/3. The polypeptide is Argininosuccinate synthase (Bacillus thuringiensis subsp. konkukian (strain 97-27)).